The following is a 100-amino-acid chain: Cell division protein FtsB (100 aa).

Topologically, residues 1–3 (MKW) are cytoplasmic. A helical transmembrane segment spans residues 4 to 21 (LAIILVVALLALQYRLWM). At 22-100 (GEGSIASVVS…TDKDTKKNKK (79 aa)) the chain is on the periplasmic side. Residues 26 to 73 (IASVVSLNREIAKQKEENARLRERNRLLAAEVDALKQGKDAIEERARN) are a coiled coil.

This sequence belongs to the FtsB family. Part of a complex composed of FtsB, FtsL and FtsQ.

Its subcellular location is the cell inner membrane. In terms of biological role, essential cell division protein. May link together the upstream cell division proteins, which are predominantly cytoplasmic, with the downstream cell division proteins, which are predominantly periplasmic. This Saccharophagus degradans (strain 2-40 / ATCC 43961 / DSM 17024) protein is Cell division protein FtsB.